The chain runs to 136 residues: Large ribosomal subunit protein uL16 (136 aa).

It belongs to the universal ribosomal protein uL16 family. In terms of assembly, part of the 50S ribosomal subunit.

In terms of biological role, binds 23S rRNA and is also seen to make contacts with the A and possibly P site tRNAs. In Shigella flexneri, this protein is Large ribosomal subunit protein uL16.